Reading from the N-terminus, the 201-residue chain is NADH-quinone oxidoreductase subunit C (201 aa).

This sequence belongs to the complex I 30 kDa subunit family. In terms of assembly, NDH-1 is composed of 14 different subunits. Subunits NuoB, C, D, E, F, and G constitute the peripheral sector of the complex.

The protein localises to the cell inner membrane. It catalyses the reaction a quinone + NADH + 5 H(+)(in) = a quinol + NAD(+) + 4 H(+)(out). NDH-1 shuttles electrons from NADH, via FMN and iron-sulfur (Fe-S) centers, to quinones in the respiratory chain. The immediate electron acceptor for the enzyme in this species is believed to be ubiquinone. Couples the redox reaction to proton translocation (for every two electrons transferred, four hydrogen ions are translocated across the cytoplasmic membrane), and thus conserves the redox energy in a proton gradient. The sequence is that of NADH-quinone oxidoreductase subunit C from Ruegeria sp. (strain TM1040) (Silicibacter sp.).